A 10746-amino-acid polypeptide reads, in one-letter code: Extracellular matrix-binding protein ebh (10746 aa).

A signal peptide spans Met1–Ala39. Polar residues-rich tracts occupy residues Glu41–Gln59 and Val67–Glu113. 3 disordered regions span residues Glu41–Gln174, Met246–Val274, and Ile1340–Arg1372. Residues Ala120–Ala130 are compositionally biased toward low complexity. Residues Ser132–Glu158 show a composition bias toward basic and acidic residues. Residues Val162 to Val173 are compositionally biased toward polar residues. Residues Gln248–Ser263 are compositionally biased toward low complexity. Residues Tyr1356 to Arg1372 show a composition bias toward polar residues. 59 FIVAR domains span residues Ala2520–Ala2576, Ser2606–Glu2662, Asp2683–Ala2746, Ala2776–Lys2832, Ala2860–Asn2915, Ala2943–Asn2998, Ala3026–Lys3081, Ala3150–Lys3208, Ala3276–Ala3335, Ala3403–Ala3461, Ala3529–Ala3587, Ala3655–Lys3713, Ala3781–Ala3839, Ala3907–Ala3965, Ala4033–Ala4091, Ala4159–Ala4217, Gln4285–Ala4343, Ala4411–Ala4469, Ala4537–Ile4595, Ala4663–Ala4721, Ala4789–Ala4847, Ala4915–Met4973, Ala5041–Ala5099, Ala5167–Ala5225, Ala5293–Ala5351, Ala5419–Ala5477, Ala5545–Ala5603, Ala5671–Ala5729, Ala5797–Ala5855, Ala5923–Ala5981, Ala6049–Lys6107, Ala6175–Ala6232, Ala6300–Ala6358, Ala6426–Ala6484, Ala6552–Ala6610, Ala6678–Ala6736, Ala6804–Ala6862, Ala6930–Ala6988, Ala7056–Ala7114, Ala7182–Ala7240, Ala7308–Ala7366, Ala7434–Ala7492, Ala7560–Ala7618, Ala7686–Ala7744, Ala7812–Ala7870, Ala7938–Ala7996, Ala8064–Glu8125, Ala8190–Glu8251, Ala8316–Ala8374, Ala8442–Ala8500, Ala8568–Ala8625, Leu8693–Ala8751, Ala8819–Ala8877, Ala8945–Leu9003, Ala9071–Leu9129, Ala9197–Ala9255, Ser9323–Ala9377, Val9445–Leu9504, and Ala9699–Ala9755. Residues Asp7066 to Ser7080 are compositionally biased toward polar residues. The tract at residues Asp7066–Asp7085 is disordered. The segment covering Asp10492 to His10507 has biased composition (polar residues). A disordered region spans residues Asp10492–Leu10530. The helical transmembrane segment at Ile10552–Ile10572 threads the bilayer. The interval Arg10649–Lys10746 is disordered. Basic and acidic residues predominate over residues Thr10664–His10674. The segment covering Lys10719–Lys10746 has biased composition (basic residues).

It localises to the cell membrane. This chain is Extracellular matrix-binding protein ebh (ebh), found in Staphylococcus aureus (strain MRSA252).